Reading from the N-terminus, the 260-residue chain is UPF0246 protein Tola_0968 (260 aa).

The protein belongs to the UPF0246 family.

The sequence is that of UPF0246 protein Tola_0968 from Tolumonas auensis (strain DSM 9187 / NBRC 110442 / TA 4).